The primary structure comprises 923 residues: Protocadherin gamma-B4 (923 aa).

An N-terminal signal peptide occupies residues 1–30 (MGSGAGELGRAERLPVLFLFLLSLFCPALC). Cadherin domains lie at 31-133 (EQIR…TPKF), 134-242 (TQNS…APVF), 243-345 (SQDI…APEV), 346-450 (IFQS…APVF), 451-560 (SQSS…APRV), and 568-673 (DGSA…LPDI). Residues 31–689 (EQIRYRIPEE…SDLEAELQFY (659 aa)) lie on the Extracellular side of the membrane. N-linked (GlcNAc...) asparagine glycans are attached at residues Asn417 and Asn543. The chain crosses the membrane as a helical span at residues 690-710 (LVVALALISVLFLVAMILAIA). Residues 711–923 (LRLRRSSSPA…KKKSGKKEKK (213 aa)) are Cytoplasmic-facing. 2 disordered regions span residues 797–832 (SHQQ…WPNN) and 893–923 (ATLT…KEKK). Positions 913–923 (NKKKSGKKEKK) are enriched in basic residues.

The protein localises to the cell membrane. In terms of biological role, potential calcium-dependent cell-adhesion protein. May be involved in the establishment and maintenance of specific neuronal connections in the brain. This is Protocadherin gamma-B4 (PCDHGB4) from Pan troglodytes (Chimpanzee).